Here is a 576-residue protein sequence, read N- to C-terminus: Boron transporter 1 (576 aa).

Topologically, residues 1–84 (MSNESTRVTV…SDWVDAFNYR (84 aa)) are cytoplasmic. A disordered region spans residues 19 to 48 (ECAQALERTNDELDRESSVSESRSDEESHE). The span at 26-48 (RTNDELDRESSVSESRSDEESHE) shows a compositional bias: basic and acidic residues. A helical membrane pass occupies residues 85–105 (VIPSIVDTYFNNLLPAIAFAQ). At 106–116 (DMFDRTDNSYG) the chain is on the extracellular side. A helical transmembrane segment spans residues 117–134 (VNEVLLSSAMAGIVFGVL). The Cytoplasmic portion of the chain corresponds to 135-140 (GGQPLC). A helical transmembrane segment spans residues 141 to 160 (IVGVTGPISIFNYTVYEIIK). The Extracellular portion of the chain corresponds to 161-165 (PLNTS). A helical membrane pass occupies residues 166-186 (YFGFMFWICMWSMIFHLVLAF). At 187-192 (TNAVCL) the chain is on the cytoplasmic side. The helical transmembrane segment at 193–213 (LQYVTTFPCDIFGLFINVVYI) threads the bilayer. Over 214–235 (QKGIQILTRQFSAKSGEKSVQD) the chain is Extracellular. The chain crosses the membrane as a helical span at residues 236–256 (GFASVVVALVMTAFGLFFKLF). Topologically, residues 257 to 274 (HYYPLFSHRIRTFISDYS) are cytoplasmic. Residues 275 to 295 (TALSVLFWSSFTHFGGYLHDV) form a helical membrane-spanning segment. Residues 296–329 (KFKKLPITKAFFPTSKVNRPQNTWLAYEPIPVKD) lie on the Extracellular side of the membrane. The helical transmembrane segment at 330-350 (VFIALPFGIFLTILFYFDHNV) threads the bilayer. Residues 351–373 (SSLMAQRHQYKLKKPSSFHYDFA) lie on the Cytoplasmic side of the membrane. A helical transmembrane segment spans residues 374–394 (LLGLTTCISGVLGIPAPNGLI). The Extracellular segment spans residues 395 to 438 (PQAPLHTETLLVRDSNQKVISCVEQRFTNTFQGLMILGTMTRPL). Residues 439-459 (LVCLGEIPQAVLSGLFFIMGI) form a helical membrane-spanning segment. Over 460-495 (NGLMTNSIIQRLVFLFSDPNRRDNTSPLMKVSKKSM) the chain is Cytoplasmic. The chain crosses the membrane as a helical span at residues 496–516 (LIFLSFSLTGFAGEFAITNTI). Over 517-518 (AA) the chain is Extracellular. The chain crosses the membrane as a helical span at residues 519–539 (IGFPLVLLLSVLVSFSFAYIF). At 540 to 576 (PTEELKILDTNVAQKFTIKNLLLENIRDAKFCDKHED) the chain is on the cytoplasmic side.

The protein belongs to the anion exchanger (TC 2.A.31) family.

Its subcellular location is the cell membrane. It localises to the vacuole membrane. In terms of biological role, functions in boric acid/borate export across the plasma membrane, and thereby protects yeast cells from boron toxicity. Involved in the trafficking of proteins to the vacuole. This Saccharomyces cerevisiae (strain ATCC 204508 / S288c) (Baker's yeast) protein is Boron transporter 1 (BOR1).